Here is a 490-residue protein sequence, read N- to C-terminus: MSRMAEQQLYIHGGYTSATSGRTFETINPANGNVLATVQAAGREDVDRAVKSAQQGQKIWAAMTAMERSRILRRAVDILRERNDELAKLETLDTGKAYSETSTVDIVTGADVLEYYAGLIPALEGSQIPLRETSFVYTRREPLGVVAGIGAWNYPIQIALWKSAPALAAGNAMIFKPSEVTPLTALKLAEIYSEAGLPDGVFNVLPGVGAETGQYLTEHPGIAKVSFTGGVASGKKVMANSAASSLKEVTMELGGKSPLIVFDDADLDLAADIAMMANFFSSGQVCTNGTRVFVPAKCKAAFEQKILARVERIRAGDVFDPQTNFGPLVSFPHRDNVLRYIAKGQEEGARVLCGGDVLKGDGFDNGAWVAPTVFTDCRDDMTIVREEIFGPVMSILTYETEDEVIRRANDTDYGLAAGIVTADLNRAHRVIHQLEAGICWINTWGESPAEMPVGGYKHSGIGRENGVMTLQSYTQVKSIQVEMAKFQSIF.

Residues T26, I27, and D93 each coordinate K(+). 150 to 152 (GAW) contacts NAD(+). K162 serves as the catalytic Charge relay system. 176 to 179 (KPSE) provides a ligand contact to NAD(+). V180 contacts K(+). NAD(+) is bound at residue 230-233 (GVAS). L246 serves as a coordination point for K(+). Residue E252 is the Proton acceptor of the active site. The NAD(+) site is built by G254, C286, and E387. The active-site Nucleophile is C286. C286 is modified (cysteine sulfenic acid (-SOH)). The K(+) site is built by K457 and G460. The active-site Charge relay system is E464.

This sequence belongs to the aldehyde dehydrogenase family. In terms of assembly, dimer of dimers. K(+) is required as a cofactor.

It carries out the reaction betaine aldehyde + NAD(+) + H2O = glycine betaine + NADH + 2 H(+). Its pathway is amine and polyamine biosynthesis; betaine biosynthesis via choline pathway; betaine from betaine aldehyde: step 1/1. Its function is as follows. Involved in the biosynthesis of the osmoprotectant glycine betaine. Catalyzes the irreversible oxidation of betaine aldehyde to the corresponding acid. The sequence is that of Betaine aldehyde dehydrogenase from Escherichia coli O9:H4 (strain HS).